The sequence spans 581 residues: Arginine--tRNA ligase (581 aa).

A 'HIGH' region motif is present at residues 123–133 (PNVAKEMHVGH).

Belongs to the class-I aminoacyl-tRNA synthetase family. In terms of assembly, monomer.

The protein localises to the cytoplasm. It catalyses the reaction tRNA(Arg) + L-arginine + ATP = L-arginyl-tRNA(Arg) + AMP + diphosphate. The protein is Arginine--tRNA ligase of Blochmanniella pennsylvanica (strain BPEN).